We begin with the raw amino-acid sequence, 125 residues long: Ribosome-binding factor A (125 aa).

The protein belongs to the RbfA family. Monomer. Binds 30S ribosomal subunits, but not 50S ribosomal subunits or 70S ribosomes.

It localises to the cytoplasm. One of several proteins that assist in the late maturation steps of the functional core of the 30S ribosomal subunit. Associates with free 30S ribosomal subunits (but not with 30S subunits that are part of 70S ribosomes or polysomes). Required for efficient processing of 16S rRNA. May interact with the 5'-terminal helix region of 16S rRNA. The chain is Ribosome-binding factor A from Thermosipho melanesiensis (strain DSM 12029 / CIP 104789 / BI429).